Consider the following 213-residue polypeptide: Probable septum site-determining protein MinC (213 aa).

It belongs to the MinC family. Interacts with MinD and FtsZ.

In terms of biological role, cell division inhibitor that blocks the formation of polar Z ring septums. Rapidly oscillates between the poles of the cell to destabilize FtsZ filaments that have formed before they mature into polar Z rings. Prevents FtsZ polymerization. This chain is Probable septum site-determining protein MinC, found in Pseudothermotoga lettingae (strain ATCC BAA-301 / DSM 14385 / NBRC 107922 / TMO) (Thermotoga lettingae).